The chain runs to 690 residues: CREB-H transcription factor homolog let-607 (690 aa).

3 disordered regions span residues 87–118 (NDNC…SSGG), 166–192 (SAVH…SNGL), and 205–253 (PASI…KYPP). Composition is skewed to low complexity over residues 100-116 (SLPI…YHSS), 170-181 (QNQQQQQRRLNQ), and 213-236 (PSSS…SSST). In terms of domain architecture, bZIP spans 284–347 (DLKRIRRKIR…QSVISQLKKL (64 aa)). Positions 286–321 (KRIRRKIRNKRSAQTSRKRKQDYIEQLEDRVSESTK) are basic motif. The stretch at 295 to 350 (KRSAQTSRKRKQDYIEQLEDRVSESTKENQALKQQIERLSSENQSVISQLKKLQAQ) forms a coiled coil. A leucine-zipper region spans residues 326-333 (LKQQIERL). A compositionally biased stretch (polar residues) spans 451–464 (HNNSKYPASGNQNH). 2 disordered regions span residues 451–495 (HNNS…SMYR) and 509–536 (GARK…ATSP). Composition is skewed to low complexity over residues 480–492 (QPKQ…HQPS) and 514–535 (SSTS…SATS).

The protein belongs to the bZIP family.

It localises to the nucleus. Functionally, probable transcription factor, required during migration of the gonadal distal tip cells (DTC). Probably regulates cell adhesion of DTCs via modulation of expression of genes involved in integrin-mediated adhesion, including tln-1, src-1, and integrin pat-2. Modulates expression of genes involved in protein trafficking during embryogenesis, including emo-1, sec-61, calu-1, sec-24.1, enpl-1, sar-1 and tfg-1. This Caenorhabditis elegans protein is CREB-H transcription factor homolog let-607.